Here is a 391-residue protein sequence, read N- to C-terminus: MSRFLICSFALVLLYPAGIDMYLVGLPRIAADLNASEAQLHIAFSVYLAGMAAAMLFAGKVADRSGRKPVAIPGAALFIIASVFCSLAETSALFLAGRFLQGLGAGCCYVVAFAILRDTLDDRRRAKVLSLLNGITCIIPVLAPVLGHLIMLNFPWQSLFWTMAIMGVAVLMLSLFILKETRPAAPAASDKPRENSESLLNRFFLSRVVITTLSVSVILTFVNTSPVLLMEIMGFERGEYATIMALTAGVSMTVSFSTPFALGIFKPRTLMITSQVLFLAAGITLAVSPSHAVSLFGITLICAGFSVGFGVAMSQALGPFSLRAGVASSTLGIAQVCGSSLWIWLAAVVGIGAWNMLIGILIACSIVSLLLIMFVAPGRPVAAHEEIHHHA.

Transmembrane regions (helical) follow at residues 4–24 (FLICSFALVLLYPAGIDMYLV), 42–62 (IAFSVYLAGMAAAMLFAGKVA), 69–89 (PVAIPGAALFIIASVFCSLAE), 93–113 (LFLAGRFLQGLGAGCCYVVAF), 134–154 (GITCIIPVLAPVLGHLIMLNF), 158–178 (SLFWTMAIMGVAVLMLSLFIL), 203–222 (FFLSRVVITTLSVSVILTFV), 245–265 (ALTAGVSMTVSFSTPFALGIF), 269–289 (TLMITSQVLFLAAGITLAVSP), 293–313 (VSLFGITLICAGFSVGFGVAM), 331–351 (LGIAQVCGSSLWIWLAAVVGI), and 356–376 (MLIGILIACSIVSLLLIMFVA).

It belongs to the major facilitator superfamily. DHA1 family. MdtL (TC 2.A.1.2.22) subfamily.

Its subcellular location is the cell inner membrane. Functionally, confers resistance to chloramphenicol. This chain is Multidrug resistance protein MdtL, found in Escherichia coli O81 (strain ED1a).